The chain runs to 200 residues: Holliday junction branch migration complex subunit RuvA (200 aa).

Residues 1 to 64 (MIAKLKGLLD…ENDMRLLGFA (64 aa)) are domain I. The interval 65-143 (EASERDWFRL…ALPSAPGGAA (79 aa)) is domain II. The interval 144-154 (MAANPAGGASA) is flexible linker. The interval 154–200 (ADAVSALENLGFKPAIAARAVATAQGELGEGASESELIRVALKRAAG) is domain III.

The protein belongs to the RuvA family. Homotetramer. Forms an RuvA(8)-RuvB(12)-Holliday junction (HJ) complex. HJ DNA is sandwiched between 2 RuvA tetramers; dsDNA enters through RuvA and exits via RuvB. An RuvB hexamer assembles on each DNA strand where it exits the tetramer. Each RuvB hexamer is contacted by two RuvA subunits (via domain III) on 2 adjacent RuvB subunits; this complex drives branch migration. In the full resolvosome a probable DNA-RuvA(4)-RuvB(12)-RuvC(2) complex forms which resolves the HJ.

The protein resides in the cytoplasm. Functionally, the RuvA-RuvB-RuvC complex processes Holliday junction (HJ) DNA during genetic recombination and DNA repair, while the RuvA-RuvB complex plays an important role in the rescue of blocked DNA replication forks via replication fork reversal (RFR). RuvA specifically binds to HJ cruciform DNA, conferring on it an open structure. The RuvB hexamer acts as an ATP-dependent pump, pulling dsDNA into and through the RuvAB complex. HJ branch migration allows RuvC to scan DNA until it finds its consensus sequence, where it cleaves and resolves the cruciform DNA. This Erythrobacter litoralis (strain HTCC2594) protein is Holliday junction branch migration complex subunit RuvA.